The sequence spans 457 residues: Siroheme synthase (457 aa).

Positions 1 to 204 (MDHLPIFCQL…QDQQAVEETT (204 aa)) are precorrin-2 dehydrogenase /sirohydrochlorin ferrochelatase. Residues 22-23 (DV) and 43-44 (LA) contribute to the NAD(+) site. Serine 128 carries the post-translational modification Phosphoserine. Residues 216 to 457 (GEVVLVGAGP…REKLNWFSNH (242 aa)) form a uroporphyrinogen-III C-methyltransferase region. Position 225 (proline 225) interacts with S-adenosyl-L-methionine. Aspartate 248 acts as the Proton acceptor in catalysis. The active-site Proton donor is the lysine 270. S-adenosyl-L-methionine is bound by residues 301–303 (GGD), isoleucine 306, 331–332 (TA), methionine 382, and glycine 411.

The protein in the N-terminal section; belongs to the precorrin-2 dehydrogenase / sirohydrochlorin ferrochelatase family. In the C-terminal section; belongs to the precorrin methyltransferase family.

It carries out the reaction uroporphyrinogen III + 2 S-adenosyl-L-methionine = precorrin-2 + 2 S-adenosyl-L-homocysteine + H(+). The enzyme catalyses precorrin-2 + NAD(+) = sirohydrochlorin + NADH + 2 H(+). The catalysed reaction is siroheme + 2 H(+) = sirohydrochlorin + Fe(2+). It participates in cofactor biosynthesis; adenosylcobalamin biosynthesis; precorrin-2 from uroporphyrinogen III: step 1/1. Its pathway is cofactor biosynthesis; adenosylcobalamin biosynthesis; sirohydrochlorin from precorrin-2: step 1/1. It functions in the pathway porphyrin-containing compound metabolism; siroheme biosynthesis; precorrin-2 from uroporphyrinogen III: step 1/1. The protein operates within porphyrin-containing compound metabolism; siroheme biosynthesis; siroheme from sirohydrochlorin: step 1/1. It participates in porphyrin-containing compound metabolism; siroheme biosynthesis; sirohydrochlorin from precorrin-2: step 1/1. Multifunctional enzyme that catalyzes the SAM-dependent methylations of uroporphyrinogen III at position C-2 and C-7 to form precorrin-2 via precorrin-1. Then it catalyzes the NAD-dependent ring dehydrogenation of precorrin-2 to yield sirohydrochlorin. Finally, it catalyzes the ferrochelation of sirohydrochlorin to yield siroheme. In Enterobacter sp. (strain 638), this protein is Siroheme synthase.